We begin with the raw amino-acid sequence, 584 residues long: DNA ligase (584 aa).

An ATP-binding site is contributed by E249. K251 (N6-AMP-lysine intermediate) is an active-site residue. R256, R271, E301, F341, R416, and K422 together coordinate ATP.

This sequence belongs to the ATP-dependent DNA ligase family. It depends on Mg(2+) as a cofactor.

It carries out the reaction ATP + (deoxyribonucleotide)n-3'-hydroxyl + 5'-phospho-(deoxyribonucleotide)m = (deoxyribonucleotide)n+m + AMP + diphosphate.. In terms of biological role, DNA ligase that seals nicks in double-stranded DNA during DNA replication, DNA recombination and DNA repair. The polypeptide is DNA ligase (Pyrobaculum islandicum (strain DSM 4184 / JCM 9189 / GEO3)).